Reading from the N-terminus, the 547-residue chain is Chaperonin GroEL (547 aa).

ATP is bound by residues 30–33 (TLGP), K51, 87–91 (DGTTT), G415, 479–481 (NAA), and D495. Residues 525-547 (PKEDSPGAGAGMGGMGGMGGMDM) are disordered. A compositionally biased stretch (gly residues) spans 532-547 (AGAGMGGMGGMGGMDM).

It belongs to the chaperonin (HSP60) family. In terms of assembly, forms a cylinder of 14 subunits composed of two heptameric rings stacked back-to-back. Interacts with the co-chaperonin GroES.

Its subcellular location is the cytoplasm. It catalyses the reaction ATP + H2O + a folded polypeptide = ADP + phosphate + an unfolded polypeptide.. Its function is as follows. Together with its co-chaperonin GroES, plays an essential role in assisting protein folding. The GroEL-GroES system forms a nano-cage that allows encapsulation of the non-native substrate proteins and provides a physical environment optimized to promote and accelerate protein folding. In Nitrosomonas europaea (strain ATCC 19718 / CIP 103999 / KCTC 2705 / NBRC 14298), this protein is Chaperonin GroEL.